The chain runs to 265 residues: Triosephosphate isomerase (265 aa).

13-15 serves as a coordination point for substrate; the sequence is NWK. Histidine 106 serves as the catalytic Electrophile. Catalysis depends on glutamate 179, which acts as the Proton acceptor. Substrate-binding positions include glycine 185, serine 223, and 244-245; that span reads GG.

Belongs to the triosephosphate isomerase family. In terms of assembly, homodimer.

It localises to the cytoplasm. It carries out the reaction D-glyceraldehyde 3-phosphate = dihydroxyacetone phosphate. The protein operates within carbohydrate biosynthesis; gluconeogenesis. Its pathway is carbohydrate degradation; glycolysis; D-glyceraldehyde 3-phosphate from glycerone phosphate: step 1/1. Involved in the gluconeogenesis. Catalyzes stereospecifically the conversion of dihydroxyacetone phosphate (DHAP) to D-glyceraldehyde-3-phosphate (G3P). This Acinetobacter baylyi (strain ATCC 33305 / BD413 / ADP1) protein is Triosephosphate isomerase.